We begin with the raw amino-acid sequence, 226 residues long: Exopolysaccharide production protein ExoY (226 aa).

Residues 34–54 (VLAASVALLLFSPLFLLIMAL) traverse the membrane as a helical segment.

Belongs to the bacterial sugar transferase family.

The protein resides in the cell membrane. The protein operates within glycan metabolism; exopolysaccharide biosynthesis. Functionally, needed for the addition of the first sugar (galactose) to the isoprenoid carrier. May function as a sugar transferase. The sequence is that of Exopolysaccharide production protein ExoY (exoY) from Rhizobium meliloti (strain 1021) (Ensifer meliloti).